Reading from the N-terminus, the 321-residue chain is Prephenate dehydratase (321 aa).

A Prephenate dehydratase domain is found at 3–189; the sequence is RIAYLGPEGT…ARTRFVLVGR (187 aa). Residues 203 to 280 enclose the ACT domain; that stretch reads SAVLRIDNQP…ADVRYLGSWP (78 aa).

Homodimer.

The enzyme catalyses prephenate + H(+) = 3-phenylpyruvate + CO2 + H2O. It participates in amino-acid biosynthesis; L-phenylalanine biosynthesis; phenylpyruvate from prephenate: step 1/1. The protein is Prephenate dehydratase (pheA) of Mycobacterium bovis (strain ATCC BAA-935 / AF2122/97).